Consider the following 522-residue polypeptide: Protein GDS1 (522 aa).

Disordered stretches follow at residues 56 to 88 (ALDD…PKKD), 222 to 268 (QQLE…SSNS), 300 to 391 (LSPS…SHNA), and 433 to 489 (STQT…SRNE). A compositionally biased stretch (polar residues) spans 62–73 (LAGSSFSSSQEI). Residues 74–88 (KATKPKKDFGAPKKD) are compositionally biased toward basic and acidic residues. 4 stretches are compositionally biased toward polar residues: residues 222–236 (QQLE…FNSN), 244–260 (SSNQ…SMTD), 300–314 (LSPS…LLTP), and 355–366 (SQSLSVLSTPKK). Residues 368-378 (SSASLSTFASS) are compositionally biased toward low complexity. Positions 379–391 (KNISPDSSLSHNA) are enriched in polar residues. The span at 439–467 (ESSSESSQYNSSSSSPVNSAAASSAESLS) shows a compositional bias: low complexity. Residues 468-489 (DINSSQDNGRESNPSSQESRNE) are compositionally biased toward polar residues.

Functionally, involved in nuclear control of mitochondria. The polypeptide is Protein GDS1 (GDS1) (Saccharomyces cerevisiae (strain ATCC 204508 / S288c) (Baker's yeast)).